Consider the following 601-residue polypeptide: Glutathione-regulated potassium-efflux system protein KefB (601 aa).

The next 13 membrane-spanning stretches (helical) occupy residues 4–24 (SDFLLAGVLFLFAAVAAVPLA), 29–49 (IGAVLGYLLAGIAIGPWGLGF), 55–75 (EILHFSELGVVFLMFIIGLEL), 87–107 (IFGVGAAQVLLSAALLAGLLM), 115–135 (AAVVGGIGLAMSSTAMALQLM), 152–172 (VLLFQDLAVIPALALVPLLAG), 177–197 (HFDWMKIGMKVLAFVGMLIGG), 207–227 (FIAASGVREVFTAATLLLVLG), 230–250 (LFMDALGLSMALGTFIAGVLL), 268–288 (GLLLGLFFISVGMSLNLGVLY), 291–311 (LLWVVISVVVLVAVKILVLYL), 324–344 (MQFAGVLSQGGEFAFVLFSTA), and 356–376 (ALLLVTVTLSMMTTPLLMKLV). Residues 400 to 519 (KPQVIVVGFG…AGVTQFSRET (120 aa)) form the RCK N-terminal domain.

It belongs to the monovalent cation:proton antiporter 2 (CPA2) transporter (TC 2.A.37) family. KefB subfamily. As to quaternary structure, interacts with the regulatory subunit KefG.

The protein localises to the cell inner membrane. Functionally, pore-forming subunit of a potassium efflux system that confers protection against electrophiles. Catalyzes K(+)/H(+) antiport. This is Glutathione-regulated potassium-efflux system protein KefB from Shigella sonnei (strain Ss046).